Here is a 404-residue protein sequence, read N- to C-terminus: 2,3-bisphosphoglycerate-independent phosphoglycerate mutase (404 aa).

Residues 155–183 (LSDMIGDSDPHREGLPPEKIRPTDPSGDR) form a disordered region. Over residues 162 to 183 (SDPHREGLPPEKIRPTDPSGDR) the composition is skewed to basic and acidic residues.

It belongs to the BPG-independent phosphoglycerate mutase family. A-PGAM subfamily.

The enzyme catalyses (2R)-2-phosphoglycerate = (2R)-3-phosphoglycerate. It participates in carbohydrate degradation; glycolysis; pyruvate from D-glyceraldehyde 3-phosphate: step 3/5. Functionally, catalyzes the interconversion of 2-phosphoglycerate and 3-phosphoglycerate. The protein is 2,3-bisphosphoglycerate-independent phosphoglycerate mutase of Thermoplasma acidophilum (strain ATCC 25905 / DSM 1728 / JCM 9062 / NBRC 15155 / AMRC-C165).